Consider the following 177-residue polypeptide: MSRIAKAPVDVVSGVEVSISGQEVTVKGSKGTLTRVFNDAVEVAQEENQLKALPREGFADSWAQAGTVRSILNAMVQGVSQGFEKKLTLLGVGYRAQAQGSKLNLTLGFSHPVVYEMPEGITVETPSQTEIVVKGADKQVVGQVAANIRGYRPPEPYKGKGVRYADENVRRKEAKKK.

It belongs to the universal ribosomal protein uL6 family. Part of the 50S ribosomal subunit.

This protein binds to the 23S rRNA, and is important in its secondary structure. It is located near the subunit interface in the base of the L7/L12 stalk, and near the tRNA binding site of the peptidyltransferase center. The chain is Large ribosomal subunit protein uL6 from Alteromonas mediterranea (strain DSM 17117 / CIP 110805 / LMG 28347 / Deep ecotype).